The following is a 229-amino-acid chain: MLTAMRGDIRAARERDPAAPTALEVIFCYPGVHAVWGHRLAHWLWQRGARLLARAAAEFTRILTGVDIHPGAVIGARVFIDHATGVVIGETAEVGDDVTIYHGVTLGGSGMVGGKRHPTVGDRVIIGAGAKVLGPIKIGEDSRIGANAVVVKPVPPSAVVVGVPGQVIGQSQPSPGGPFDWRLPDLVGASLDSLLTRVARLEALGGGPQAAGVIRPPEAGIWHGEDFSI.

It belongs to the transferase hexapeptide repeat family.

It is found in the cytoplasm. It carries out the reaction L-serine + acetyl-CoA = O-acetyl-L-serine + CoA. It functions in the pathway amino-acid biosynthesis; L-cysteine biosynthesis; L-cysteine from L-serine: step 1/2. Functionally, catalyzes the acetylation of serine by acetyl-CoA to produce O-acetylserine (OAS). In Mycobacterium tuberculosis (strain ATCC 25618 / H37Rv), this protein is Serine acetyltransferase (cysE).